We begin with the raw amino-acid sequence, 447 residues long: Na(+)/H(+) antiporter NhaA 2 (447 aa).

10 helical membrane passes run 34-54, 77-97, 115-135, 146-166, 176-196, 200-220, 290-310, 321-341, 359-379, and 393-413; these read VGGV…NSPW, LTLG…VVGL, ALPI…FVLV, GWAI…AVIG, FLLT…AVFY, INGL…LCVQ, VSAG…SIGG, PITL…IVLT, WVDV…SLLI, and FVKI…AVVL.

It belongs to the NhaA Na(+)/H(+) (TC 2.A.33) antiporter family.

It is found in the cell membrane. It carries out the reaction Na(+)(in) + 2 H(+)(out) = Na(+)(out) + 2 H(+)(in). Na(+)/H(+) antiporter that extrudes sodium in exchange for external protons. The sequence is that of Na(+)/H(+) antiporter NhaA 2 from Mycolicibacterium gilvum (strain PYR-GCK) (Mycobacterium gilvum (strain PYR-GCK)).